The sequence spans 310 residues: Bifunctional protein FolD 3, chloroplastic (310 aa).

The N-terminal 48 residues, methionine 1–arginine 48, are a transit peptide targeting the chloroplast.

The protein belongs to the tetrahydrofolate dehydrogenase/cyclohydrolase family. Homodimer.

It localises to the plastid. Its subcellular location is the chloroplast. The catalysed reaction is (6R)-5,10-methylene-5,6,7,8-tetrahydrofolate + NADP(+) = (6R)-5,10-methenyltetrahydrofolate + NADPH. The enzyme catalyses (6R)-5,10-methenyltetrahydrofolate + H2O = (6R)-10-formyltetrahydrofolate + H(+). The protein operates within one-carbon metabolism; tetrahydrofolate interconversion. Functionally, catalyzes the oxidation of 5,10-methylenetetrahydrofolate to 5,10-methenyltetrahydrofolate and then the hydrolysis of 5,10-methenyltetrahydrofolate to 10-formyltetrahydrofolate. In Arabidopsis thaliana (Mouse-ear cress), this protein is Bifunctional protein FolD 3, chloroplastic (FOLD3).